A 79-amino-acid polypeptide reads, in one-letter code: Succinate dehydrogenase assembly factor 1, mitochondrial (79 aa).

Belongs to the complex I LYR family. SDHAF1 subfamily. As to quaternary structure, interacts with sdh2 within an sdh1-sdh2 subcomplex.

Its subcellular location is the mitochondrion matrix. In terms of biological role, plays an essential role in the assembly of succinate dehydrogenase (SDH), an enzyme complex (also referred to as respiratory complex II) that is a component of both the tricarboxylic acid (TCA) cycle and the mitochondrial electron transport chain, and which couples the oxidation of succinate to fumarate with the reduction of ubiquinone (coenzyme Q) to ubiquinol. Promotes maturation of the iron-sulfur protein subunit sdh2 of the SDH catalytic dimer, protecting it from the deleterious effects of oxidants. May act together with SDHAF3. The protein is Succinate dehydrogenase assembly factor 1, mitochondrial of Schizosaccharomyces pombe (strain 972 / ATCC 24843) (Fission yeast).